The sequence spans 125 residues: Translation initiation factor 5A (125 aa).

The residue at position 35 (K35) is a Hypusine.

The protein belongs to the eIF-5A family.

It localises to the cytoplasm. Functionally, functions by promoting the formation of the first peptide bond. This Methanoculleus marisnigri (strain ATCC 35101 / DSM 1498 / JR1) protein is Translation initiation factor 5A (eIF5A).